Here is a 96-residue protein sequence, read N- to C-terminus: Basic blue protein (96 aa).

Residues 1–96 enclose the Phytocyanin domain; sequence AVYVVGGSGG…SGMKIAVNAL (96 aa). Cu cation is bound by residues His39, Cys79, His84, and Met89. A disulfide bond links Cys52 and Cys85.

The sequence is that of Basic blue protein from Cucumis sativus (Cucumber).